The primary structure comprises 151 residues: MPLYEHVFLARQDVTAQQVETMVETYKGVIETGGGTIEKIESWGVKSLAYRIKKNRKAHFTLLNISAPPAAVAEMERQMQISEDVLRFMTVRVEQLEAEPSAMMQKRDRDDRKDRDRGDRPRRRDDDFGGGDRGDRGDRGDRPERNFGGEN.

Residues 97-151 form a disordered region; that stretch reads EAEPSAMMQKRDRDDRKDRDRGDRPRRRDDDFGGGDRGDRGDRGDRPERNFGGEN. The segment covering 105–151 has biased composition (basic and acidic residues); it reads QKRDRDDRKDRDRGDRPRRRDDDFGGGDRGDRGDRGDRPERNFGGEN.

It belongs to the bacterial ribosomal protein bS6 family.

In terms of biological role, binds together with bS18 to 16S ribosomal RNA. The protein is Small ribosomal subunit protein bS6 of Methylorubrum extorquens (strain CM4 / NCIMB 13688) (Methylobacterium extorquens).